Here is a 294-residue protein sequence, read N- to C-terminus: 4-hydroxy-tetrahydrodipicolinate synthase (294 aa).

T45 contributes to the pyruvate binding site. The Proton donor/acceptor role is filled by Y133. Catalysis depends on K161, which acts as the Schiff-base intermediate with substrate. I203 serves as a coordination point for pyruvate.

It belongs to the DapA family. Homotetramer; dimer of dimers.

The protein resides in the cytoplasm. It carries out the reaction L-aspartate 4-semialdehyde + pyruvate = (2S,4S)-4-hydroxy-2,3,4,5-tetrahydrodipicolinate + H2O + H(+). It participates in amino-acid biosynthesis; L-lysine biosynthesis via DAP pathway; (S)-tetrahydrodipicolinate from L-aspartate: step 3/4. Catalyzes the condensation of (S)-aspartate-beta-semialdehyde [(S)-ASA] and pyruvate to 4-hydroxy-tetrahydrodipicolinate (HTPA). This is 4-hydroxy-tetrahydrodipicolinate synthase from Shewanella baltica (strain OS223).